Consider the following 737-residue polypeptide: Protein bicaudal D homolog (737 aa).

Coiled coils occupy residues 1–255 (MAES…RNAE), 292–319 (GSSDVKVRELEAAKEGLQEELKSREKIF), and 547–684 (AENE…DRDR). The interval 72-97 (YRSQHQRSTRSELENEESLLEESSAK) is disordered. The disordered stretch occupies residues 686-737 (VFKRSSTRAPTRETYQPPRAVRYPGSTTTAQQPAPSSSGGSRGGPRRGDNQQ). The segment covering 710–719 (GSTTTAQQPA) has biased composition (polar residues).

It belongs to the BicD family. As to quaternary structure, component of a dynein-regulating complex composed of at least bicd-1, dlc-1 and egal-1. Interacts with egal-1 and unc-83. As to expression, expressed in the excretory cell, body wall muscles, vulval muscle cells, PVD and FLP sensory neurons and AVF interneurons.

Its subcellular location is the nucleus envelope. The protein resides in the perikaryon. It is found in the cell projection. It localises to the dendrite. Part of a complex with dlc-1 and egal-1, which is recruited to the nuclear envelope by unc-83, where in turn, it recruits dynein to the nuclear surface and regulates nuclear migration in hypodermal precursor cells. Required for the formation of dendritic branches of PVD sensory neurons. The protein is Protein bicaudal D homolog of Caenorhabditis elegans.